The chain runs to 461 residues: Ribitol-5-phosphate transferase FKTN (461 aa).

Residues 1 to 7 (MSRINKN) lie on the Cytoplasmic side of the membrane. Positions 6–27 (KNVVLALLTLTSSAFLLFQLYY) are required and sufficient for interaction with POMGNT1. The helical; Signal-anchor for type II membrane protein transmembrane segment at 8–28 (VVLALLTLTSSAFLLFQLYYY) threads the bilayer. Over 29-461 (KHYLSARNGP…SEWDEVIQLY (433 aa)) the chain is Lumenal. N-linked (GlcNAc...) asparagine glycosylation is present at N92.

This sequence belongs to the LicD transferase family. As to quaternary structure, forms a complex composed of FKTN/fukutin, FKRP and RXYLT1/TMEM5. Interacts (via transmembrane domain) with POMGNT1; the interaction is direct and is required for normal POMGNT1 location in Golgi membranes. Expressed in the retina, with highest levels found in the inner segments of photoreceptors and the outer plexiform layer (at protein level). Expressed at lower levels in the inner and outer nuclear layers, the inner plexiform layers, and the ganglion cell layers of the retina (at protein level). Expressed in the heart, brain, spleen, lung, liver, skeletal muscle, kidney and testis.

Its subcellular location is the golgi apparatus membrane. It localises to the cytoplasm. The protein localises to the nucleus. The protein resides in the endoplasmic reticulum. The catalysed reaction is 3-O-[beta-D-GalNAc-(1-&gt;3)-beta-D-GlcNAc-(1-&gt;4)-(O-6-P-alpha-D-Man)]-Thr-[protein] + CDP-L-ribitol = 3-O-[Rib-ol-P-3-beta-D-GalNAc-(1-&gt;3)-beta-D-GlcNAc-(1-&gt;4)-(O-6-P-alpha-D-Man)]-Thr-[protein] + CMP + H(+). Its pathway is protein modification; protein glycosylation. Functionally, catalyzes the transfer of CDP-ribitol to the distal N-acetylgalactosamine of the phosphorylated O-mannosyl trisaccharide (N-acetylgalactosamine-beta-3-N-acetylglucosamine-beta-4-(phosphate-6-)mannose), a carbohydrate structure present in alpha-dystroglycan (DAG1). This constitutes the first step in the formation of the ribitol 5-phosphate tandem repeat which links the phosphorylated O-mannosyl trisaccharide to the ligand binding moiety composed of repeats of 3-xylosyl-alpha-1,3-glucuronic acid-beta-1. Required for normal location of POMGNT1 in Golgi membranes, and for normal POMGNT1 activity. May interact with and reinforce a large complex encompassing the outside and inside of muscle membranes. Could be involved in brain development. The chain is Ribitol-5-phosphate transferase FKTN from Mus musculus (Mouse).